The chain runs to 506 residues: Photosystem II CP47 reaction center protein (506 aa).

A run of 6 helical transmembrane segments spans residues 21–36, 101–115, 140–156, 203–218, 237–252, and 457–472; these read SVHI…WAGS, ILFS…IWHW, GIHL…FGAF, IAAG…FHLS, VLSS…AFVV, and SFAL…HGAR.

It belongs to the PsbB/PsbC family. PsbB subfamily. In terms of assembly, PSII is composed of 1 copy each of membrane proteins PsbA, PsbB, PsbC, PsbD, PsbE, PsbF, PsbH, PsbI, PsbJ, PsbK, PsbL, PsbM, PsbT, PsbX, PsbY, PsbZ, Psb30/Ycf12, at least 3 peripheral proteins of the oxygen-evolving complex and a large number of cofactors. It forms dimeric complexes. It depends on Binds multiple chlorophylls. PSII binds additional chlorophylls, carotenoids and specific lipids. as a cofactor.

Its subcellular location is the plastid. It localises to the chloroplast thylakoid membrane. In terms of biological role, one of the components of the core complex of photosystem II (PSII). It binds chlorophyll and helps catalyze the primary light-induced photochemical processes of PSII. PSII is a light-driven water:plastoquinone oxidoreductase, using light energy to abstract electrons from H(2)O, generating O(2) and a proton gradient subsequently used for ATP formation. In Cucumis sativus (Cucumber), this protein is Photosystem II CP47 reaction center protein.